A 214-amino-acid polypeptide reads, in one-letter code: Probable transaldolase (214 aa).

The active-site Schiff-base intermediate with substrate is the K83.

The protein belongs to the transaldolase family. Type 3B subfamily.

It is found in the cytoplasm. It carries out the reaction D-sedoheptulose 7-phosphate + D-glyceraldehyde 3-phosphate = D-erythrose 4-phosphate + beta-D-fructose 6-phosphate. The protein operates within carbohydrate degradation; pentose phosphate pathway; D-glyceraldehyde 3-phosphate and beta-D-fructose 6-phosphate from D-ribose 5-phosphate and D-xylulose 5-phosphate (non-oxidative stage): step 2/3. Functionally, transaldolase is important for the balance of metabolites in the pentose-phosphate pathway. This Streptococcus pyogenes serotype M1 protein is Probable transaldolase (tal).